The chain runs to 595 residues: MSLQMDKIYVKVHELKFVNNLERNSHYVKIYWDDKKYKSQTKDGGCYIFNETFLIPITNIYDQKDQIIYVEIWESNLLNKQCAYTFFTLNSIKIGQIIKENITFIEVLKKCTLGLSINIVRNQKDILFFNIKELLPTFQDQEIINAVWKNEDEASIIKQLINLNTIDGITNIGNYKNSQNYNETLQKPKENISIYKSGEEIENSYIPSSTPEYVSHYIYKGAGENSSNYINKTKDTLFPTYLNNYAYNNNIKNVYDTPNGAHYSSNNNSGSNNAYSNFDHNINNSPKNNVPFSNSDNDKIFHYSRNYMPSPNSEKMLYFSCGNKKKALLIGIDYCGTQNELKGSINDAIITNELLIKKYNFYDSSMNILKLIDNQTNPNYRPTKRNILSALEWLVQDNNPGDIFFFFYSGHSYKKYDYTCIEKGGYNQTIVPCDFKTEGEIIDNDLHKYLIQPLKDGVKLVSFIDCPNSEGILNLGYKYKLKKEKWKETYNPFHVLADVTQFSYSKINEFPTEINLLEHVLITNNIEALTYHYMIQSIHSYINLYNKKKKKKIFLMSSQKFNIDRKFDFNHILKNSNSELGQQKNIIKWKKNKKK.

Residues H411 and C466 contribute to the active site.

This sequence belongs to the peptidase C14B family. Monomer.

Its activity is regulated as follows. Activated by Ca(2+). Its function is as follows. Cysteine protease that cleaves specifically after arginine or lysine residues. The chain is Metacaspase-1 from Plasmodium berghei (strain Anka).